We begin with the raw amino-acid sequence, 101 residues long: MSIATIVPENAVIGQAVNIRSMETDIVSLDDRLLQAFSGSAIATAVDKQTITNRIEDPNLVTDPKELAISQEMISDYNLYVSMVSTLTRKGVGAVETLLRS.

This sequence to S.flexneri MxiI.

In terms of biological role, required for invasion of epithelial cells. The protein is Protein PrgJ (prgJ) of Salmonella typhimurium (strain LT2 / SGSC1412 / ATCC 700720).